The chain runs to 276 residues: Dermonecrotic toxin LlSicTox-alphaIV2i (276 aa).

Residue His-5 is part of the active site. Positions 25 and 27 each coordinate Mg(2+). His-41 functions as the Nucleophile in the catalytic mechanism. 2 disulfide bridges follow: Cys-45–Cys-51 and Cys-47–Cys-193. Asp-85 contributes to the Mg(2+) binding site.

This sequence belongs to the arthropod phospholipase D family. Class II subfamily. Mg(2+) serves as cofactor. As to expression, expressed by the venom gland.

Its subcellular location is the secreted. It catalyses the reaction an N-(acyl)-sphingosylphosphocholine = an N-(acyl)-sphingosyl-1,3-cyclic phosphate + choline. The enzyme catalyses an N-(acyl)-sphingosylphosphoethanolamine = an N-(acyl)-sphingosyl-1,3-cyclic phosphate + ethanolamine. It carries out the reaction a 1-acyl-sn-glycero-3-phosphocholine = a 1-acyl-sn-glycero-2,3-cyclic phosphate + choline. The catalysed reaction is a 1-acyl-sn-glycero-3-phosphoethanolamine = a 1-acyl-sn-glycero-2,3-cyclic phosphate + ethanolamine. Its function is as follows. Dermonecrotic toxins cleave the phosphodiester linkage between the phosphate and headgroup of certain phospholipids (sphingolipid and lysolipid substrates), forming an alcohol (often choline) and a cyclic phosphate. This toxin acts on sphingomyelin (SM). It may also act on ceramide phosphoethanolamine (CPE), lysophosphatidylcholine (LPC) and lysophosphatidylethanolamine (LPE), but not on lysophosphatidylserine (LPS), and lysophosphatidylglycerol (LPG). It acts by transphosphatidylation, releasing exclusively cyclic phosphate products as second products. Induces dermonecrosis, hemolysis, increased vascular permeability, edema, inflammatory response, and platelet aggregation. The chain is Dermonecrotic toxin LlSicTox-alphaIV2i from Loxosceles laeta (South American recluse spider).